Consider the following 141-residue polypeptide: Hemoglobin subunit alpha-1/2 (141 aa).

Positions 1 to 141 (VLSAABKSBV…VSTVLTSKYR (141 aa)) constitute a Globin domain. At S3 the chain carries Phosphoserine. N6-succinyllysine is present on residues K7 and K11. At K16 the chain carries N6-acetyllysine; alternate. Position 16 is an N6-succinyllysine; alternate (K16). The residue at position 24 (Y24) is a Phosphotyrosine. S35 carries the post-translational modification Phosphoserine. N6-succinyllysine is present on K40. S49 carries the phosphoserine modification. H58 is a binding site for O2. H87 lines the heme b pocket. S102 bears the Phosphoserine mark. The residue at position 108 (T108) is a Phosphothreonine. S124 is modified (phosphoserine). A phosphothreonine mark is found at T134 and T137. S138 carries the post-translational modification Phosphoserine.

The protein belongs to the globin family. As to quaternary structure, heterotetramer of two alpha chains and two beta chains. In terms of tissue distribution, red blood cells.

Involved in oxygen transport from the lung to the various peripheral tissues. The chain is Hemoglobin subunit alpha-1/2 from Odocoileus virginianus virginianus (Virginia white-tailed deer).